A 549-amino-acid polypeptide reads, in one-letter code: Sorting nexin-33 (549 aa).

In terms of domain architecture, SH3 spans 1–61; it reads MALKARALYS…PASYVEILRP (61 aa). Positions 66–83 are enriched in polar residues; that stretch reads VQVDYSGHTQGYTDSPHQ. Residues 66–137 are disordered; that stretch reads VQVDYSGHTQ…RPEYTHRPRP (72 aa). Positions 86–101 are enriched in acidic residues; sequence YDDDEEDDDDWDDWDD. A compositionally biased stretch (polar residues) spans 110–119; sequence SGSNGVSRSQ. Over residues 127 to 137 the composition is skewed to basic and acidic residues; that stretch reads PRPEYTHRPRP. The region spanning 205–315 is the PX domain; sequence FSCSVEEPTK…HFLSCQDEKQ (111 aa). Positions 346–549 constitute a BAR domain; that stretch reads LQDVEERVDV…EKTLHMYDDL (204 aa).

Belongs to the sorting nexin family.

Its subcellular location is the cytoplasm. The protein localises to the cytosol. It localises to the membrane. The protein resides in the cytoplasmic vesicle membrane. Its function is as follows. Plays a role in the reorganization of the cytoskeleton, endocytosis and cellular vesicle trafficking, both during interphase and at the end of mitotic cell divisions. Required for efficient progress through mitosis and cytokinesis. Required for normal formation of the cleavage furrow at the end of mitosis. Modulates endocytosis of cell-surface proteins. Promotes membrane tubulation (in vitro). May promote the formation of macropinosomes. This is Sorting nexin-33 (snx33) from Xenopus tropicalis (Western clawed frog).